We begin with the raw amino-acid sequence, 164 residues long: Anterior gradient protein 2 (164 aa).

A signal peptide spans 1–20 (METVLKTLFVLLVATSLTLA). 2 short sequence motifs (homodimer stabilization; interchain) span residues 34–43 (SRGWGDNLEW) and 49–56 (EGLYKAKT).

Belongs to the AGR family. Monomer and homodimer.

The protein resides in the secreted. It is found in the endoplasmic reticulum. The sequence is that of Anterior gradient protein 2 from Xenopus tropicalis (Western clawed frog).